A 172-amino-acid chain; its full sequence is uncharacterized protein (172 aa).

A compositionally biased stretch (low complexity) spans 1 to 28 (MAAAGVTAKAGGGTSAAAASLIRARSPA). The disordered stretch occupies residues 1–172 (MAAAGVTAKA…GGRRSGRDAG (172 aa)). The span at 58–68 (PRRRSRARRGH) shows a compositional bias: basic residues. A compositionally biased stretch (gly residues) spans 80-100 (TVGGEGQASQIGGGGGGGGGR). Residues 129–138 (PGLASSPGVA) show a composition bias toward low complexity. Residues 139 to 165 (PAGGSGGLWSGAGLCSGLGARGFPGGR) are compositionally biased toward gly residues.

This is an uncharacterized protein from Homo sapiens (Human).